The primary structure comprises 90 residues: Bombyxin G-1 (90 aa).

The first 19 residues, 1–19 (MKLIIFVVFCITIYGSTSG), serve as a signal peptide directing secretion. Cystine bridges form between Cys28-Cys77, Cys40-Cys90, and Cys76-Cys81. A propeptide spans 49–67 (NTQYEGYHWPLLAYSEERI) (c peptide like).

The protein belongs to the insulin family. Heterodimer of a B chain and an A chain linked by two disulfide bonds.

The protein resides in the secreted. This is Bombyxin G-1 (BBXG1) from Bombyx mori (Silk moth).